Consider the following 287-residue polypeptide: Short-chain dehydrogenase virD (287 aa).

8 residues coordinate NADP(+): valine 10, threonine 36, aspartate 57, asparagine 85, tyrosine 149, lysine 153, valine 182, and threonine 184. Tyrosine 149 functions as the Proton acceptor in the catalytic mechanism. Lysine 153 (lowers pKa of active site Tyr) is an active-site residue.

The protein belongs to the short-chain dehydrogenases/reductases (SDR) family.

The protein operates within secondary metabolite biosynthesis. Functionally, short-chain dehydrogenase; part of the gene cluster that mediates the biosynthesis of virensols and trichoxide, fungal natural products that contain or are derived from a salicylaldehyde core. The pathway begins with the synthesis of the reduced chain in virensol C by the highly reducing polyketide synthase virA via condensation of one acetate and 8 malonate units. VirA has interesting programming rules since the first 2 ketides are fully reduced, the 3 following ketides undergo beta-dehydration, and the last 3 ketides are only reduced to beta-hydroxys to yield the trihydroxy portion. The production of aldehyde virensol C by virA alone is surprising, since virA does not contain a reductase (R) domain that is typically associated with reductive product release in HRPKS. The cupin-domain enzyme virC is involved in enhancing virA product turnover. The short-chain dehydrogenase virB then oxidizes the C-7 alcohol of virensol C to a ketone, yielding virensol D. Virensol D is further transformed to salicylaldehyde 5-deoxyaurocitrin by the short-chain dehydrogenase virD. VirD catalyzes the dehydrogenation of C-3 to form the beta-ketone aldehyde, which is followed by the generation of the nucleophilic C-2 that is required for the intramolecular aldol condensation between C-2 and C-7, itself followed by dehydration and aromatization which leads to salicylaldehyde 5-deoxyaurocitrin. While the dehydrogenation of virensol D is definitely catalyzed by virD, the aldol condensation and dehydration may be uncatalyzed or assisted by virD. The short chain dehydrogenase virG then converts salicylaldehyde 5-deoxyaurocitrin into virensol B which is further hydroxylated by the cytochrome P450 monooxygenase virE to yield the hydroquinone virensol A. VirI then may oxidize virensol A to form the quinone, while virH performs the epoxidation. Finally, the two remaining short-chain dehydrogenases, virK and virL, are probably responsible for reducing the ketones to the corresponding alcohols to furnish the epoxycyclohexanol structure in trichoxide. The polypeptide is Short-chain dehydrogenase virD (Hypocrea virens (strain Gv29-8 / FGSC 10586) (Gliocladium virens)).